We begin with the raw amino-acid sequence, 157 residues long: Endoribonuclease YbeY (157 aa).

Zn(2+)-binding residues include histidine 116, histidine 120, and histidine 126.

It belongs to the endoribonuclease YbeY family. The cofactor is Zn(2+).

The protein localises to the cytoplasm. In terms of biological role, single strand-specific metallo-endoribonuclease involved in late-stage 70S ribosome quality control and in maturation of the 3' terminus of the 16S rRNA. This is Endoribonuclease YbeY from Pseudarthrobacter chlorophenolicus (strain ATCC 700700 / DSM 12829 / CIP 107037 / JCM 12360 / KCTC 9906 / NCIMB 13794 / A6) (Arthrobacter chlorophenolicus).